The following is a 94-amino-acid chain: HssA/B-like protein 49 (94 aa).

Residues 1–20 (MTLFSSISSISNPMTSSKSS) are disordered.

This sequence belongs to the hssA/B family.

In Dictyostelium discoideum (Social amoeba), this protein is HssA/B-like protein 49 (hssl49).